Consider the following 192-residue polypeptide: ADP-ribosylation factor-like protein 14 (192 aa).

G2 is lipidated: N-myristoyl glycine. Residues 20–27 (GLDSAGKS), 64–68 (DVGGQ), and 124–127 (NKQD) contribute to the GTP site.

It belongs to the small GTPase superfamily. Arf family. As to quaternary structure, interacts with ARL14EP.

The protein localises to the cytoplasmic vesicle. Its function is as follows. GTPase that recruits MYO1E to MHC class II-containing vesicles via the effector protein ARL14EP and hence controls the movement of these vesicles along the actin cytoskeleton in dendritic cells. The chain is ADP-ribosylation factor-like protein 14 (Arl14) from Mus musculus (Mouse).